Reading from the N-terminus, the 590-residue chain is Aspartate--tRNA(Asp/Asn) ligase (590 aa).

Residue Glu-176 participates in L-aspartate binding. Residues Gln-200–Lys-203 are aspartate. L-aspartate is bound by residues Arg-222 and His-451. Arg-222–Glu-224 lines the ATP pocket. Position 485 (Glu-485) interacts with ATP. Arg-492 is a binding site for L-aspartate. Gly-537–Arg-540 is a binding site for ATP.

This sequence belongs to the class-II aminoacyl-tRNA synthetase family. Type 1 subfamily. In terms of assembly, homodimer.

Its subcellular location is the cytoplasm. It catalyses the reaction tRNA(Asx) + L-aspartate + ATP = L-aspartyl-tRNA(Asx) + AMP + diphosphate. Its function is as follows. Aspartyl-tRNA synthetase with relaxed tRNA specificity since it is able to aspartylate not only its cognate tRNA(Asp) but also tRNA(Asn). Reaction proceeds in two steps: L-aspartate is first activated by ATP to form Asp-AMP and then transferred to the acceptor end of tRNA(Asp/Asn). This chain is Aspartate--tRNA(Asp/Asn) ligase, found in Ehrlichia chaffeensis (strain ATCC CRL-10679 / Arkansas).